Reading from the N-terminus, the 1403-residue chain is MAEHGESSEDRISEIDYEFLAELSARFGMNLVQLAKSQEEEDHKERMKMKKGFNSQMRSEAKRLKTFESYDTFRSWTPQEMAAAGFYHTGVKLGVQCFCCSLILFGNSLRKLPIERHKKLRPECEFLQGKDVGNIGKYDIRVKSPEKMLRGGKARYHEEEARLESFEDWPFYAHGTSPRALSAAGFVFTGKRDTVQCFSCGGSLGNWEEGDDPWKEHAKWFPKCEFLQSKKSSEEIAQYIQDYEGFVHVTGEHFVKSWVRRELPMVSAYCNDSVFTNEELRMDMFKDWPQESPVGFEALVRAGFFYTGKKDIVRCFSCGGCLEKWAEGDDPMEDHIKFFPECVFLQTLKSSAEVIPTLQSQYALPEATETTRESNHDDAAAVHSTVVDLGRSEAQWFQEARSLSEQLRDTYTKTSFCHMNLPEVCSSLGTDHLLGCDVSIISKHVSQPVQGALTIPEVFSNLSSVMCVEGEAGSGKTTFLKRIAFLWASGCCPLLYRFQLVFYLSLSSITPDQGLANIICTQLLGAGGCISEVCLSSSIQQLQHQVLFLLDDYSGLASLPQALHTLITKNYLFRTCLLIAVHTNRVRDIRPYLGTSLEIQEFPFYNTVFVLRKFFSHDIICVEKLIIYFSENKDLQGVYKTPLFVAAVCNDWNQNASAQDDFQDVTLFHSYMQYLSLKYKATAESLQATVSSCGQLALTGLFSSCFEFNSDDLAEAGVDEDVKLTTFLMSKFTAQRLRPVYRFLGPLFQEFLAAVRLTELLSSDRQEDQDLGLYYLRQIDSPLKAINSFNIFLYYVSSHSSSKAAPTVVSHLLQLVDEKESLENMSENEDYMKLHPQTFLWFQFVRGLWLVSPESFSSFVSEHLLRLALIFAYESNTVAECSPFILQFLRGRTLALRVLNLEYFWDHPESLLLLRSLKVSINGNKMSSYVDYSFKTYFENLQPPAINEEYTSAFEHVSEWRRNFAQDEEIIKNYENIWPRALPDISEGYWNLSPKPCKIPKLEVQVNNMGPADQALLQVLMEVFSASQSIEFHLFNSSGFLESIRPALELSKASVTKCSMSRLELSRAEQELLLTLPALQSLEVSETNQLPDQLFHNLHKFLGLKELCVRLDGKPDVLSVLPEEFLNLHHMEKLSIRTSTESDLSKLVKFIQNFPNLHVFHLKCDFLSNCESLMTALASCKKLREIEFSGQCFEAMTFVNILPNFVSLKILSLKGQQFADKETSEKFAQALGSLRNLEELLVPTGDGIHQVAKLIVRQCLQLPCLRVLAFHDILDDESVIEIARAATSGSFQKLENLDISMNHKITEEGYRNFFQALDNLPNLQMLNICRNIPGRIQVQATTVKALGHCVSRLPSLTRLGMLSWLLDEEDMKVINDVKERHPQSKRLTIFWKWIVPFSPVVLE.

3 BIR repeats span residues 60-127 (EAKR…CEFL), 159-227 (EEAR…CEFL), and 278-345 (EELR…CVFL). Zn(2+) is bound by residues Cys315, Cys318, His335, and Cys342. Residues 464–759 (SVMCVEGEAG…EFLAAVRLTE (296 aa)) form the NACHT domain. 473 to 478 (GSGKTT) contacts ATP.

Component of the NLRC4 inflammasome, at least composed of NLRC4, caspase-1 (CASP1) and some NAIP protein. As to quaternary structure, (Microbial infection) Interacts with S.typhimurium (Salmonella) flagellin.

Its function is as follows. Sensor component of the NLRC4 inflammasome that specifically recognizes and binds flagellin from pathogenic bacteria. Association of pathogenic bacteria proteins drives in turn drive assembly and activation of the NLRC4 inflammasome, promoting caspase-1 activation, cytokine production and macrophage pyroptosis. The NLRC4 inflammasome is activated as part of the innate immune response to a range of intracellular bacteria. The NLRC4 inflammasome senses Gram-negative bacteria such as L.pneumophila and P.aeruginosa, enteric pathogens S.typhimurium (Salmonella) and S.flexneri. May contribute to prevent motor-neuron apoptosis induced by a variety of signals. In Mus musculus (Mouse), this protein is Baculoviral IAP repeat-containing protein 1f (Naip6).